We begin with the raw amino-acid sequence, 464 residues long: Argininosuccinate lyase (464 aa).

The protein belongs to the lyase 1 family. Argininosuccinate lyase subfamily.

The protein resides in the cytoplasm. The catalysed reaction is 2-(N(omega)-L-arginino)succinate = fumarate + L-arginine. The protein operates within amino-acid biosynthesis; L-arginine biosynthesis; L-arginine from L-ornithine and carbamoyl phosphate: step 3/3. This Ectopseudomonas mendocina (strain ymp) (Pseudomonas mendocina) protein is Argininosuccinate lyase.